Reading from the N-terminus, the 350-residue chain is Protein-glutamate methylesterase/protein-glutamine glutaminase (350 aa).

Positions 5-122 constitute a Response regulatory domain; that stretch reads RVLSVDDSAL…REGMLAYSEM (118 aa). D56 bears the 4-aspartylphosphate mark. The region spanning 152-338 is the CheB-type methylesterase domain; that stretch reads LLSSEKLLVI…DLSQVVSQQM (187 aa). Residues S164, H190, and D286 contribute to the active site.

The protein belongs to the CheB family. In terms of processing, phosphorylated by CheA. Phosphorylation of the N-terminal regulatory domain activates the methylesterase activity.

The protein localises to the cytoplasm. The enzyme catalyses [protein]-L-glutamate 5-O-methyl ester + H2O = L-glutamyl-[protein] + methanol + H(+). The catalysed reaction is L-glutaminyl-[protein] + H2O = L-glutamyl-[protein] + NH4(+). Functionally, involved in chemotaxis. Part of a chemotaxis signal transduction system that modulates chemotaxis in response to various stimuli. Catalyzes the demethylation of specific methylglutamate residues introduced into the chemoreceptors (methyl-accepting chemotaxis proteins or MCP) by CheR. Also mediates the irreversible deamidation of specific glutamine residues to glutamic acid. The chain is Protein-glutamate methylesterase/protein-glutamine glutaminase from Enterobacter cloacae.